A 427-amino-acid polypeptide reads, in one-letter code: Transcription termination factor Rho (427 aa).

One can recognise a Rho RNA-BD domain in the interval 51–125 (LLFMEGVLEI…LHVEAVNGDD (75 aa)). ATP-binding positions include 168-173 (GFGQRG), 180-185 (KAGKTM), and Arg-211.

This sequence belongs to the Rho family. As to quaternary structure, homohexamer. The homohexamer assembles into an open ring structure.

In terms of biological role, facilitates transcription termination by a mechanism that involves Rho binding to the nascent RNA, activation of Rho's RNA-dependent ATPase activity, and release of the mRNA from the DNA template. The polypeptide is Transcription termination factor Rho (Bacillus subtilis (strain 168)).